Consider the following 600-residue polypeptide: Putative fucosyltransferase R654 (600 aa).

The protein belongs to the glycosyltransferase 10 family.

This chain is Putative fucosyltransferase R654, found in Acanthamoeba polyphaga mimivirus (APMV).